The sequence spans 584 residues: Complement component C8 alpha chain (584 aa).

Positions 1–20 are cleaved as a signal peptide; that stretch reads MFAVVFFILSLMTCQPGVTA. Positions 21–30 are excised as a propeptide; sequence QEKVNQRVRR. The TSP type-1 1 domain occupies 38–91; sequence TCQLSNWSEWTDCFPCQDKKYRHRSLLQPNKFGGTICSGDIWDQASCSSSTTCV. 7 cysteine pairs are disulfide-bonded: C39–C74, C50–C84, C53–C90, C96–C108, C102–C121, C115–C130, and C140–C177. Residue W44 is glycosylated (C-linked (Man) tryptophan). Positions 94–132 constitute an LDL-receptor class A domain; the sequence is AQCGQDFQCKETGRCLKRHLVCNGDQDCLDGSDEDDCED. L113, N116, D118, D120, D126, and E127 together coordinate Ca(2+). The MACPF domain maps to 135–498; sequence AIDEDCSQYE…QYLMEFNACR (364 aa). 4 beta stranded membrane passes run 248-256, 259-266, 377-384, and 390-395; these read FGVTIGIGP, SPLLVGVG, GGSLGIQY, and VGGGLS. C375 and C399 are disulfide-bonded. N437 carries an N-linked (GlcNAc...) asparagine glycan. 4 disulfide bridges follow: C497–C544, C499–C515, C502–C517, and C519–C528. Residues 499 to 529 enclose the EGF-like domain; that stretch reads CGPCFNNGVPILEGTSCRCQCRLGSLGAACE. Residues 539-583 form the TSP type-1 2 domain; it reads DGSWSCWSSWSVCRAGIQERRRECDNPAPQNGGASCPGRKVQTQA. C-linked (Man) tryptophan glycosylation is found at W542, W545, and W548. Intrachain disulfides connect C551-C584 and C562-C574. A disordered region spans residues 562 to 584; it reads CDNPAPQNGGASCPGRKVQTQAC.

It belongs to the complement C6/C7/C8/C9 family. Heterotrimer of 3 chains: alpha (C8A), beta (C8B) and gamma (C8G); the alpha and gamma chains are disulfide bonded. Component of the membrane attack complex (MAC), composed of complement C5b, C6, C7, C8A, C8B, C8G and multiple copies of the pore-forming subunit C9.

The protein resides in the secreted. It localises to the target cell membrane. With respect to regulation, membrane attack complex (MAC) assembly is inhibited by CD59, thereby protecting self-cells from damage during complement activation. CD59 acts by binding to the beta-haipins of C8 (C8A and C8B), forming an intermolecular beta-sheet that prevents incorporation of the multiple copies of C9 required for complete formation of the osmolytic pore. MAC assembly is also inhibited by clusterin (CLU) chaperones that inhibit polymerization of C9. Functionally, component of the membrane attack complex (MAC), a multiprotein complex activated by the complement cascade, which inserts into a target cell membrane and forms a pore, leading to target cell membrane rupture and cell lysis. The MAC is initiated by proteolytic cleavage of C5 into complement C5b in response to the classical, alternative, lectin and GZMK complement pathways. The complement pathways consist in a cascade of proteins that leads to phagocytosis and breakdown of pathogens and signaling that strengthens the adaptive immune system. C8A, together with C8B and C8G, inserts into the target membrane, but does not form pores by itself. During MAC assembly, associates with C5b, C6 and C7 to form the C5b8 intermediate complex that inserts into the target membrane and traverses the bilayer increasing membrane rigidity. The sequence is that of Complement component C8 alpha chain from Homo sapiens (Human).